The following is a 1012-amino-acid chain: Structural polyprotein (1012 aa).

Position 30 (Asp-30) interacts with a divalent metal cation. In terms of domain architecture, Peptidase S50 spans 513 to 755; sequence ADKGYEVVAN…AGRQYHLAMA (243 aa). Ser-652 acts as the Nucleophile in catalysis. The active site involves Lys-692. Positions 970–1012 are disordered; it reads MEMKHRNPRRALPKPKPKPNAPTQRPPGRLGRWIRTVSDEDLE. Basic residues predominate over residues 975-986; the sequence is RNPRRALPKPKP. Residues 1003–1012 form an interaction with VP1 protein region; the sequence is IRTVSDEDLE.

In terms of assembly, homotrimer. A central divalent metal stabilizes the VP2 trimer. Interacts with host ITGA4/ITGB1. Homodimer. Interacts (via C-terminus) with VP1 in the cytoplasm. Interacts with VP2. Post-translationally, specific enzymatic cleavages yield mature proteins. The capsid assembly seems to be regulated by polyprotein processing. The protease VP4 cleaves itself off the polyprotein, thus releasing pre-VP2 and VP3 within the infected cell. During capsid assembly, the C-terminus of pre-VP2 is further processed by VP4, giving rise to VP2, the external capsid protein and three small peptides that all stay closely associated with the capsid.

The protein localises to the virion. The protein resides in the host cytoplasm. Functionally, capsid protein VP2 self assembles to form an icosahedral capsid with a T=13 symmetry, about 70 nm in diameter, and consisting of 260 VP2 trimers. The capsid encapsulates the genomic dsRNA. VP2 is also involved in attachment and entry into the host cell by interacting with host ITGA4/ITGB1. Its function is as follows. The precursor of VP2 plays an important role in capsid assembly. First, pre-VP2 and VP2 oligomers assemble to form a procapsid. Then, the pre-VP2 intermediates may be processed into VP2 proteins by proteolytic cleavage mediated by VP4 to obtain the mature virion. The final capsid is composed of pentamers and hexamers but VP2 has a natural tendency to assemble into all-pentameric structures. Therefore pre-VP2 may be required to allow formation of the hexameric structures. In terms of biological role, protease VP4 is a serine protease that cleaves the polyprotein into its final products. Pre-VP2 is first partially cleaved, and may be completely processed by VP4 upon capsid maturation. Capsid protein VP3 plays a key role in virion assembly by providing a scaffold for the capsid made of VP2. May self-assemble to form a T=4-like icosahedral inner-capsid composed of at least 180 trimers. Plays a role in genomic RNA packaging by recruiting VP1 into the capsid and interacting with the dsRNA genome segments to form a ribonucleoprotein complex. Additionally, the interaction of the VP3 C-terminal tail with VP1 removes the inherent structural blockade of the polymerase active site. Thus, VP3 can also function as a transcriptional activator. Functionally, structural peptide 1 is a small peptide derived from pre-VP2 C-terminus. It destabilizes and perforates cell membranes, suggesting a role during entry. Its function is as follows. Structural peptide 2 is a small peptide derived from pVP2 C-terminus. It is not essential for the virus viability, but viral growth is affected when missing. In terms of biological role, structural peptide 3 is a small peptide derived from pVP2 C-terminus. It is not essential for the virus viability, but viral growth is affected when missing. Structural peptide 4 is a small peptide derived from pVP2 C-terminus. It is essential for the virus viability. The chain is Structural polyprotein from Avian infectious bursal disease virus (strain Chicken/Cuba/Soroa/1998) (IBDV).